We begin with the raw amino-acid sequence, 299 residues long: Protoheme IX farnesyltransferase (299 aa).

Transmembrane regions (helical) follow at residues 29-49 (VVTL…PGAV), 51-71 (LQPL…AAAM), 100-120 (HAAT…YWLV), 123-143 (LTAW…TAYL), 150-170 (NIVI…TAVT), 177-197 (GLLL…ALAI), 223-243 (CIFL…LVGM), 244-264 (SGAL…YKAW), and 275-295 (AMDV…LLLV).

This sequence belongs to the UbiA prenyltransferase family. Protoheme IX farnesyltransferase subfamily.

Its subcellular location is the cell inner membrane. The catalysed reaction is heme b + (2E,6E)-farnesyl diphosphate + H2O = Fe(II)-heme o + diphosphate. It participates in porphyrin-containing compound metabolism; heme O biosynthesis; heme O from protoheme: step 1/1. Converts heme B (protoheme IX) to heme O by substitution of the vinyl group on carbon 2 of heme B porphyrin ring with a hydroxyethyl farnesyl side group. The sequence is that of Protoheme IX farnesyltransferase from Shewanella amazonensis (strain ATCC BAA-1098 / SB2B).